The chain runs to 1121 residues: Cuscuta receptor 1 (1121 aa).

The signal sequence occupies residues 1-20 (MGNIKFLLLVFFLIVVVVNG). Topologically, residues 21–1058 (CWEEERNALL…EESSELEDIQ (1038 aa)) are extracellular. N91 is a glycosylation site (N-linked (GlcNAc...) asparagine). LRR repeat units follow at residues 98–122 (FKSLQVLLLSSQNIIGWTKNEGFSK), 126–152 (LPNLKEVDLQYNPIDPKVLLSSLCWIS), 185–209 (LSNLRELWFEGYEINDINILSALGE), 210–233 (LRNLEKLILDDNNFNSTIFSSLKI), 234–259 (FPSLKHLNLAANEINGNVEMNDIIDL), 260–282 (SNLEYLDLSDNNIHSFATTKGNK), 284–308 (MTSLRSLLLGSSYSNSSRVIRSLKS), and 309–331 (FSSLKSLSYKNSNLTSPSIIYAL). N224 carries N-linked (GlcNAc...) asparagine glycosylation. N-linked (GlcNAc...) asparagine glycans are attached at residues N298, N321, and N333. The LRR 9 repeat unit spans residues 334–360 (LSTVEYLYFKGSSLNDNFLPNIGQMTS). 2 N-linked (GlcNAc...) asparagine glycosylation sites follow: N372 and N406. 21 LRR repeats span residues 383 to 406 (LKYIEELDFLNNNFVGTLPLCLGN), 407 to 432 (LTSLRWLSLAGNNLHGNIASHSIWRR), 433 to 457 (LTSLEYLDIADNQFDVPLSFSQFSD), 459 to 479 (KKLIYLNVGYNTIITDTEYQN), 507 to 531 (QYDLRILAIEGNQLQGKFPTWLLEN), 556 to 580 (HLHLEAVDVSNNKLNGHIPQNMSLA), 581 to 605 (FPKLLSLNMSHNHLEGPIPSKISGI), 607 to 628 (LTILDLSVNFLSGEVPGDLAVV), 630 to 654 (SPQLFYLRLSNNKLKGKIFSEEFRP), 655 to 678 (HVLSFLYLNDNNFEGALPSNVFLS), 680 to 701 (LITLDASRNNFSGEIPGCTRDN), 702 to 725 (RRLLQLDLSKNHLQGLIPVEICNL), 726 to 749 (KIINVLAISENKISGSIPSCVSSL), 751 to 772 (LKHIHLQKNQLGGELGHVIFNF), 773 to 796 (SSLITLDLRYNNFAGNIPYTIGSL), 797 to 820 (SNLNYLLLSNNKLEGDIPTQICML), 822 to 846 (NLSIVDLSFNKLYGPLPPCLGYLTQ), 914 to 938 (LKYMSGIDLSSNRLTGEIPVELGNM), 939 to 961 (SNIHALNLSHNHLNGRIPNTFSN), 962 to 986 (LQEIESLDLSCNRLNGSIPVGLLEL), and 988 to 1012 (SLAVFSVAYNNLSGAVPDFKAQFGT). N-linked (GlcNAc...) asparagine glycans are attached at residues N531, N576, and N588. N689 is a glycosylation site (N-linked (GlcNAc...) asparagine). The N-linked (GlcNAc...) asparagine glycan is linked to N771. 7 N-linked (GlcNAc...) asparagine glycosylation sites follow: N822, N937, N945, N976, N998, N1014, and N1041. Residues 1059-1079 (CFYIGFVVSFGAILLGLAAAL) traverse the membrane as a helical segment. The Cytoplasmic portion of the chain corresponds to 1080–1121 (CLNRHWRRAWFRMIEALMFYCYYFVLDNIVTPIKSRWYKNVG).

The protein belongs to the RLP family. Interacts with an 11 kDa glycine-rich protein (GRP) of C.reflexa. Interacts with SOBIR1 and SOBIR1-like kinases; presence or absence of GRP has no effect on interaction.

It localises to the cell membrane. The protein localises to the cell surface. Functionally, involved in plant defense. Contributes to resistance against parasitic plant C.reflexa. Acts as a receptor for the 11 kDa glycine-rich protein (GRP) of C.reflexa inducing immune responses such as emission of stress-related phytohormone ethylene, reactive oxygen species (ROS) release, and hypersensitive cell death. Recognizes a specific pathogen-associated molecular pattern (PAMP), a cysteine-rich peptide 21 (crip21), from GRP located on the cell wall of C.reflexa. The chain is Cuscuta receptor 1 from Solanum lycopersicum (Tomato).